The chain runs to 297 residues: Transcription factor LRL3 (297 aa).

Positions 59-109 (PDQFHHPQESGGPTMGSQEGLQPQGTVSTTSAPVVRQKPRVRARRGQATDP) are disordered. Over residues 73 to 90 (MGSQEGLQPQGTVSTTSA) the composition is skewed to polar residues. The interval 105 to 118 (QATDPHSIAERLRR) is basic motif; degenerate. Positions 105–154 (QATDPHSIAERLRRERIAERMKSLQELVPNTNKTDKASMLDEIIEYVRFL) constitute a bHLH domain. The segment at 119–154 (ERIAERMKSLQELVPNTNKTDKASMLDEIIEYVRFL) is helix-loop-helix motif.

In terms of assembly, homodimer. In terms of tissue distribution, expressed in trichomes of the root maturation zone. Detected constitutively in flowers.

The protein resides in the nucleus. Transcription factor that regulates the development of root hairs. Does not seem to be involved in the regulation of sperm cell development. This Arabidopsis thaliana (Mouse-ear cress) protein is Transcription factor LRL3.